The chain runs to 652 residues: Neuroendocrine convertase 2 (652 aa).

The N-terminal stretch at 1–22 (MKNTHVDLICVFLSIFIGIGEA) is a signal peptide. The propeptide occupies 23–107 (VDVYTNHFHV…QLKGYTRTKR (85 aa)). Residues 136–481 (QWYLKNTGQA…FGVLDAAEMV (346 aa)) enclose the Peptidase S8 domain. A glycan (N-linked (GlcNAc...) asparagine) is linked at Asn167. Active-site charge relay system residues include Asp174 and His215. Disulfide bonds link Cys232–Cys382 and Cys324–Cys354. N-linked (GlcNAc...) asparagine glycosylation is present at Asn290. Ser390 serves as the catalytic Charge relay system. Asn451 is a glycosylation site (N-linked (GlcNAc...) asparagine). Residues 489–625 (TSPPRYHCTA…ELMLHGTREA (137 aa)) enclose the P/Homo B domain. A disulfide bridge links Cys496 with Cys522. A required for ubiquitination-mediated degradation region spans residues 501–652 (IDTPHEIPAD…TVQKAHKRSH (152 aa)). An N-linked (GlcNAc...) asparagine glycan is attached at Asn542.

This sequence belongs to the peptidase S8 family. Furin subfamily. As to quaternary structure, interacts (via C-terminus) with F-box protein fsn-1 (via SPRY domain); the interaction results in egl-3 proteasomal degradation. In terms of processing, ubiquitinated. In terms of tissue distribution, expressed in head and tail ganglia. Expressed in neurons including mechanosensory and motor neurons, and interneurons (at protein level). Expressed in the nerve ring, ventral nerve cord and intestine.

Its subcellular location is the cell projection. It is found in the axon. The protein localises to the cytoplasmic vesicle. It localises to the secretory vesicle lumen. The protein resides in the secreted. It catalyses the reaction Release of protein hormones and neuropeptides from their precursors, generally by hydrolysis of -Lys-Arg-|- bonds.. Its function is as follows. Serine endoprotease which cleaves preproteins at paired basic amino acids. Processes FMRFamide-like (flp) and neuropeptide-like protein (nlp) neuropeptides. Probably by processing flp-1 and flp-18, modulates the neuronal excitation-inhibition balance and thus the level of activity of the locomotor circuit. Regulates sensitivity to mechanosensory stimuli. By processing neuropeptides, modulates basal acetylcholine release at the ventral cord neuromuscular junctions. Probably by processing flp neuropeptides, regulates the turning step of male mating behavior. Cleaves pro-insulin-like proteins ins-3, ins-4 and ins-6 into their mature active forms. Together with convertase kpc-1, cleaves pro-insulin-like protein ins-18. By controlling ins-4 and ins-6 processing and thus the activation of the daf-2/InsR pathway, negatively modulates synapse development and synaptic transmission at neuromuscular junctions. Similarly, by controlling ins-4 and ins-6 processing, negatively regulates dauer formation under optimal environmental conditions. Under adverse environmental conditions, may promote dauer formation by processing ins-18, a daf-2/InsR antagonist. May cleave dense-core vesicle membrane protein ida-1. Involved in egg-laying, fat storage and locomotion. The chain is Neuroendocrine convertase 2 from Caenorhabditis elegans.